The following is a 387-amino-acid chain: Protein REVEILLE 1 (387 aa).

Polar residues-rich tracts occupy residues 1 to 17 (MASS…NASL) and 27 to 37 (KQIQFNDQSFG). Positions 1–44 (MASSPLTANVQGTNASLRNRDEETADKQIQFNDQSFGGNDYAPK) are disordered. Residues 50-104 (TITKERERWTDEEHKKFVEALKLYGRAWRRIEEHVGSKTAVQIRSHAQKFFSKVA) form the HTH myb-type domain. Residues 77 to 100 (WRRIEEHVGSKTAVQIRSHAQKFF) constitute a DNA-binding region (H-T-H motif). 3 disordered regions span residues 105–200 (REAT…TANA), 306–334 (KAVQ…TTEP), and 350–387 (AFSE…HLHL). The segment covering 124-134 (RPKRKPAHPYP) has biased composition (basic residues). The segment covering 141 to 166 (ADQTSRSVSPSERDTQSPTSVLSTVG) has biased composition (polar residues). Low complexity-rich tracts occupy residues 172 to 200 (SLDS…TANA) and 312 to 323 (GSSTGSNTGSVD). Residues 324-333 (DTGHTEKTTE) show a composition bias toward basic and acidic residues.

It localises to the nucleus. Functionally, morning-phased transcription factor integrating the circadian clock and auxin pathways. Binds to the evening element (EE) of promoters. Does not act within the central clock, but regulates free auxin levels in a time-of-day specific manner. Positively regulates the expression of YUC8 during the day, but has no effect during the night. Negative regulator of freezing tolerance. The protein is Protein REVEILLE 1 (RVE1) of Arabidopsis thaliana (Mouse-ear cress).